Consider the following 848-residue polypeptide: MYLYIETLKQRLDAINQLRVDRALAAMGPAFQQVYSLLPTLLHYHHPLMPGYLDGNVPSGICFYTPDETQRHYLNELELYRGMTPQDPPKGELPITGVYTMGSTSSVGQSCSSDLDIWVCHQSWLDGEERQLLQRKCSLLESWAASLGVEVSFFLIDENRFRHNESGSLGGEDCGSTQHILLLDEFYRTAVRLAGKRILWSMVPCDEEEHYDDYVMTLYAQGVLTPNEWLDLGGLSSLSAEEYFGASLWQLYKSIDSPYKAVLKTLLLEAYSWEYPNPRLLAKDIKQRLHDGEIVSFGLDPYCMMLERVTEYLTAIEDPTRLDLVRRCFYLKVCEKLSRERACVGWRREVLSQLVSEWGWDDARLTMLDNRANWKIDQVREAHNELLDAMMQSYRNLIRFARRNNLSVSASPQDIGVLTRKLYAAFEALPGKVTLVNPQISPDLSEPNLTFIHVPPGRANRSGWYLYNRAPNMDSIISHQPLEYNRYLNKLVAWAWFNGLLTSRTHLFIKGNGIVDLPKLQEMVADVSHHFPLRLPAPTPKALYSPCEIRHLAIIVNLEYDPTAAFRNKVVHFDFRKLDVFSFGEEQNCLIGSIDLLYRNSWNEVRTLHFNGEQAMIEALKTILGKMHQDAAPPDSVEVFCYSQHLRGLIRTRVQQLVSECIELRLSSTRQETGRFKALRVSGQTWGLFFERLNVSVQKLENAIEFYGAISHNKLHGLSVQVETNQVKLPSVVDGFASEGIIQFFFEETGDEKGFNIYILDESNRAEVYHHCEGSKEELVRDVSRFYSSSHDRFTYGSSFINFNLPQFYQIVKTDGRAQVIPFRTQPINTVPPANQDHDAPLLQQYFS.

The interval 1–535 (MYLYIETLKQ…DVSHHFPLRL (535 aa)) is catalytic. Positions 541–848 (KALYSPCEIR…DAPLLQQYFS (308 aa)) are regulatory. Phosphohistidine; by CRR is present on histidine 609.

Belongs to the adenylyl cyclase class-1 family.

The protein resides in the cytoplasm. It carries out the reaction ATP = 3',5'-cyclic AMP + diphosphate. The chain is Adenylate cyclase (cyaA) from Salmonella typhi.